Consider the following 242-residue polypeptide: MTGKVILVGAGPGDPELITIKGLKAIKEADVVVYDDLISKELLNYAKKDAELIYVGKRKGKHSFKQEEINKILVEKAKEGKLVVRLKGGDPFVFGRGGEEILELKKHNIPYEVIPGITSAIAVPEVAGIPVTHRKVATSFTVVTGHEAEDKKEKQVDLSKLNADTIVILMGITNLENLVKELLQNPKRSKETPVAIIMEGTTKNQRVIKGTLGDIVEKAKKENARPPGVIVVGEVVNVLDSQ.

Residues P12, 88–90, 118–119, and M170 contribute to the S-adenosyl-L-homocysteine site; these read GGD and TS.

It belongs to the precorrin methyltransferase family. As to quaternary structure, homodimer.

The enzyme catalyses uroporphyrinogen III + 2 S-adenosyl-L-methionine = precorrin-2 + 2 S-adenosyl-L-homocysteine + H(+). It functions in the pathway cofactor biosynthesis; adenosylcobalamin biosynthesis; precorrin-2 from uroporphyrinogen III: step 1/1. Functionally, catalyzes the two successive C-2 and C-7 methylation reactions involved in the conversion of uroporphyrinogen III to precorrin-2 via the intermediate formation of precorrin-1. It is a step in the biosynthesis of both cobalamin (vitamin B12) and coenzyme F430. This is Uroporphyrinogen-III C-methyltransferase (cobA) from Methanocaldococcus jannaschii (strain ATCC 43067 / DSM 2661 / JAL-1 / JCM 10045 / NBRC 100440) (Methanococcus jannaschii).